Reading from the N-terminus, the 823-residue chain is Putative ankyrin repeat domain-containing protein 20A2 (823 aa).

5 ANK repeats span residues Gln-66–Val-95, Glu-99–Leu-128, Tyr-132–Ala-161, Asp-165–Ala-194, and Leu-198–Ala-227. Disordered stretches follow at residues Val-301 to Asp-343 and Val-355 to Asn-402. Basic and acidic residues predominate over residues Gln-372 to Gln-384. 3 coiled-coil regions span residues Lys-431–Glu-480, Glu-565–Thr-724, and Leu-776–Glu-805.

The sequence is that of Putative ankyrin repeat domain-containing protein 20A2 from Homo sapiens (Human).